The following is a 92-amino-acid chain: Small ribosomal subunit protein uS19c (92 aa).

Belongs to the universal ribosomal protein uS19 family.

Its subcellular location is the plastid. The protein localises to the chloroplast. In terms of biological role, protein S19 forms a complex with S13 that binds strongly to the 16S ribosomal RNA. This Populus alba (White poplar) protein is Small ribosomal subunit protein uS19c.